Reading from the N-terminus, the 147-residue chain is Large ribosomal subunit protein bL9 (147 aa).

It belongs to the bacterial ribosomal protein bL9 family.

Binds to the 23S rRNA. In Marinomonas sp. (strain MWYL1), this protein is Large ribosomal subunit protein bL9.